The primary structure comprises 412 residues: Serine--tRNA ligase (412 aa).

228-230 (TAE) is a binding site for L-serine. ATP is bound at residue 259–261 (RKE). L-serine is bound at residue glutamate 282. 346–349 (EISS) is an ATP binding site. Serine 380 serves as a coordination point for L-serine.

The protein belongs to the class-II aminoacyl-tRNA synthetase family. Type-1 seryl-tRNA synthetase subfamily. In terms of assembly, homodimer. The tRNA molecule binds across the dimer.

The protein resides in the cytoplasm. It carries out the reaction tRNA(Ser) + L-serine + ATP = L-seryl-tRNA(Ser) + AMP + diphosphate + H(+). The catalysed reaction is tRNA(Sec) + L-serine + ATP = L-seryl-tRNA(Sec) + AMP + diphosphate + H(+). Its pathway is aminoacyl-tRNA biosynthesis; selenocysteinyl-tRNA(Sec) biosynthesis; L-seryl-tRNA(Sec) from L-serine and tRNA(Sec): step 1/1. Its function is as follows. Catalyzes the attachment of serine to tRNA(Ser). Is also able to aminoacylate tRNA(Sec) with serine, to form the misacylated tRNA L-seryl-tRNA(Sec), which will be further converted into selenocysteinyl-tRNA(Sec). The polypeptide is Serine--tRNA ligase (Aliarcobacter butzleri (strain RM4018) (Arcobacter butzleri)).